A 389-amino-acid polypeptide reads, in one-letter code: TelA-like protein SH1505 (389 aa).

The protein belongs to the TelA family.

The protein is TelA-like protein SH1505 of Staphylococcus haemolyticus (strain JCSC1435).